Consider the following 101-residue polypeptide: MAEIAVEVVYALPERQALLRLSVPAGTSAREAVLLSGIAEAFPGLDVQGCPLGIFGKLLARPEERVLEAGERVEIYRPLIADPKEVRKQRAARARSEREGG.

Belongs to the UPF0125 (RnfH) family.

The polypeptide is Protein RnfH (Pseudomonas aeruginosa (strain LESB58)).